The sequence spans 161 residues: Cytochrome c-type biogenesis protein CcmE (161 aa).

The Cytoplasmic segment spans residues 1 to 8 (MNPRRKKR). The chain crosses the membrane as a helical; Signal-anchor for type II membrane protein span at residues 9–29 (LGLILALFVGISATVGLMLYA). The Periplasmic portion of the chain corresponds to 30-161 (LNQNMDLFYT…TEQQKQGTGQ (132 aa)). Histidine 129 and tyrosine 133 together coordinate heme. The interval 142–161 (MKKTHEPLQYTEQQKQGTGQ) is disordered. The segment covering 151–161 (YTEQQKQGTGQ) has biased composition (polar residues).

Belongs to the CcmE/CycJ family.

It localises to the cell inner membrane. Its function is as follows. Heme chaperone required for the biogenesis of c-type cytochromes. Transiently binds heme delivered by CcmC and transfers the heme to apo-cytochromes in a process facilitated by CcmF and CcmH. This chain is Cytochrome c-type biogenesis protein CcmE, found in Aliivibrio fischeri (strain MJ11) (Vibrio fischeri).